Here is a 151-residue protein sequence, read N- to C-terminus: Ribosome maturation factor RimP (151 aa).

It belongs to the RimP family.

The protein localises to the cytoplasm. In terms of biological role, required for maturation of 30S ribosomal subunits. The chain is Ribosome maturation factor RimP from Caldicellulosiruptor saccharolyticus (strain ATCC 43494 / DSM 8903 / Tp8T 6331).